We begin with the raw amino-acid sequence, 236 residues long: MLPTLIRRLSRALLWFAASSIVLVLVFRWVPPPGTALMVERKVQSWVNGEPIDLQRDWEPWENISDELKVAVIAGEDQKFASHWGFDIPAIQAALAYNERGGNVRGASTLTQQVAKNLFLWSGRSWFRKGLEAWFTALIELFWSKERILEVYLNSAEWGKGVFGAQAAARYHFGVDASRLSRQQAAQLAAVLPSPIKWSASRPSAYVASRAGWIRRQMSQLGGPSYLMQLDTSRKL.

The helical transmembrane segment at 12–31 threads the bilayer; the sequence is ALLWFAASSIVLVLVFRWVP.

This sequence belongs to the glycosyltransferase 51 family.

The protein localises to the cell inner membrane. It carries out the reaction [GlcNAc-(1-&gt;4)-Mur2Ac(oyl-L-Ala-gamma-D-Glu-L-Lys-D-Ala-D-Ala)](n)-di-trans,octa-cis-undecaprenyl diphosphate + beta-D-GlcNAc-(1-&gt;4)-Mur2Ac(oyl-L-Ala-gamma-D-Glu-L-Lys-D-Ala-D-Ala)-di-trans,octa-cis-undecaprenyl diphosphate = [GlcNAc-(1-&gt;4)-Mur2Ac(oyl-L-Ala-gamma-D-Glu-L-Lys-D-Ala-D-Ala)](n+1)-di-trans,octa-cis-undecaprenyl diphosphate + di-trans,octa-cis-undecaprenyl diphosphate + H(+). It functions in the pathway cell wall biogenesis; peptidoglycan biosynthesis. Functionally, peptidoglycan polymerase that catalyzes glycan chain elongation from lipid-linked precursors. The chain is Biosynthetic peptidoglycan transglycosylase from Pseudomonas putida (strain GB-1).